A 262-amino-acid polypeptide reads, in one-letter code: Glutamine-binding protein (262 aa).

A signal peptide spans 1-26 (MKRKTVWKIWITLALIALLSITALAG). The N-palmitoyl cysteine moiety is linked to residue cysteine 27. Cysteine 27 carries S-diacylglycerol cysteine lipidation.

The protein belongs to the bacterial solute-binding protein 3 family.

It localises to the cell membrane. Involved in glutamine-transport system. Interacts with the glutamine-transport system GlnPQ. This is Glutamine-binding protein (glnH) from Geobacillus stearothermophilus (Bacillus stearothermophilus).